Consider the following 840-residue polypeptide: Protein translocase subunit SecA (840 aa).

Residues Gln87, 105 to 109, and Asp494 each bind ATP; that span reads GEGKT. A disordered region spans residues 518 to 537; the sequence is RRIDNQLRGRSGRQGDPGSS. Positions 826, 828, 837, and 838 each coordinate Zn(2+).

The protein belongs to the SecA family. Monomer and homodimer. Part of the essential Sec protein translocation apparatus which comprises SecA, SecYEG and auxiliary proteins SecDF-YajC and YidC. The cofactor is Zn(2+).

It is found in the cell inner membrane. Its subcellular location is the cytoplasm. The enzyme catalyses ATP + H2O + cellular proteinSide 1 = ADP + phosphate + cellular proteinSide 2.. In terms of biological role, part of the Sec protein translocase complex. Interacts with the SecYEG preprotein conducting channel. Has a central role in coupling the hydrolysis of ATP to the transfer of proteins into and across the cell membrane, serving as an ATP-driven molecular motor driving the stepwise translocation of polypeptide chains across the membrane. This chain is Protein translocase subunit SecA, found in Desulforapulum autotrophicum (strain ATCC 43914 / DSM 3382 / VKM B-1955 / HRM2) (Desulfobacterium autotrophicum).